The sequence spans 139 residues: Nucleoside diphosphate kinase (139 aa).

Lysine 11, phenylalanine 59, arginine 87, threonine 93, arginine 104, and asparagine 114 together coordinate ATP. Histidine 117 functions as the Pros-phosphohistidine intermediate in the catalytic mechanism.

It belongs to the NDK family. As to quaternary structure, homotetramer. Mg(2+) is required as a cofactor.

Its subcellular location is the cytoplasm. It carries out the reaction a 2'-deoxyribonucleoside 5'-diphosphate + ATP = a 2'-deoxyribonucleoside 5'-triphosphate + ADP. The catalysed reaction is a ribonucleoside 5'-diphosphate + ATP = a ribonucleoside 5'-triphosphate + ADP. Its function is as follows. Major role in the synthesis of nucleoside triphosphates other than ATP. The ATP gamma phosphate is transferred to the NDP beta phosphate via a ping-pong mechanism, using a phosphorylated active-site intermediate. The polypeptide is Nucleoside diphosphate kinase (Wolbachia pipientis subsp. Culex pipiens (strain wPip)).